A 288-amino-acid polypeptide reads, in one-letter code: UDP-3-O-acyl-N-acetylglucosamine deacetylase (288 aa).

Positions 79, 236, and 240 each coordinate Zn(2+). The Proton donor role is filled by His-263.

This sequence belongs to the LpxC family. Zn(2+) serves as cofactor.

It catalyses the reaction a UDP-3-O-[(3R)-3-hydroxyacyl]-N-acetyl-alpha-D-glucosamine + H2O = a UDP-3-O-[(3R)-3-hydroxyacyl]-alpha-D-glucosamine + acetate. It participates in glycolipid biosynthesis; lipid IV(A) biosynthesis; lipid IV(A) from (3R)-3-hydroxytetradecanoyl-[acyl-carrier-protein] and UDP-N-acetyl-alpha-D-glucosamine: step 2/6. In terms of biological role, catalyzes the hydrolysis of UDP-3-O-myristoyl-N-acetylglucosamine to form UDP-3-O-myristoylglucosamine and acetate, the committed step in lipid A biosynthesis. This Rickettsia bellii (strain OSU 85-389) protein is UDP-3-O-acyl-N-acetylglucosamine deacetylase.